Reading from the N-terminus, the 23-residue chain is Protein YqfH (23 aa).

In Escherichia coli (strain K12), this protein is Protein YqfH.